We begin with the raw amino-acid sequence, 212 residues long: Deoxyribose-phosphate aldolase (212 aa).

The active-site Proton donor/acceptor is the Asp-89. Lys-151 (schiff-base intermediate with acetaldehyde) is an active-site residue. The active-site Proton donor/acceptor is Lys-180.

It belongs to the DeoC/FbaB aldolase family. DeoC type 1 subfamily.

The protein localises to the cytoplasm. The catalysed reaction is 2-deoxy-D-ribose 5-phosphate = D-glyceraldehyde 3-phosphate + acetaldehyde. Its pathway is carbohydrate degradation; 2-deoxy-D-ribose 1-phosphate degradation; D-glyceraldehyde 3-phosphate and acetaldehyde from 2-deoxy-alpha-D-ribose 1-phosphate: step 2/2. In terms of biological role, catalyzes a reversible aldol reaction between acetaldehyde and D-glyceraldehyde 3-phosphate to generate 2-deoxy-D-ribose 5-phosphate. In Clostridium botulinum (strain Kyoto / Type A2), this protein is Deoxyribose-phosphate aldolase.